A 312-amino-acid polypeptide reads, in one-letter code: Aldehyde reductase YPR1 (312 aa).

The active-site Proton donor is the Y56. A substrate-binding site is contributed by H112. Residue 220-274 (SPFGSANAPLLKEQAIIDMAKKHGVEPAQLIISWSIQRGYVVLAKSVNPERIVSN) participates in NADP(+) binding.

The protein belongs to the aldo/keto reductase family.

The protein resides in the cytoplasm. It catalyses the reaction a primary alcohol + NADP(+) = an aldehyde + NADPH + H(+). The enzyme catalyses 2-methylbutan-1-ol + NADP(+) = 2-methylbutanal + NADPH + H(+). The catalysed reaction is hexan-1-ol + NADP(+) = hexanal + NADPH + H(+). Aldehyde reductase with broad substrate specificity, catalyzing the NADPH-dependent reduction of aldehydes into the corresponding alcohols. In vitro, displays high specific activity towards 2-methylbutanal (2-methylbutyraldehyde), as well as other aldehydes such as hexanal (a toxic lipid peroxidation product and phytoalexin), but exhibits extremely low activity as a glycerol dehydrogenase. Seems to contribute to 2-methylbutanal reduction in vivo, and may therefore play a role in isoleucine catabolism and fusel alcohol formation. This Saccharomyces cerevisiae (strain ATCC 204508 / S288c) (Baker's yeast) protein is Aldehyde reductase YPR1 (YPR1).